We begin with the raw amino-acid sequence, 422 residues long: Tyrosine--tRNA ligase (422 aa).

Y35 is a binding site for L-tyrosine. Positions 40 to 49 match the 'HIGH' region motif; sequence PTAASLHVGH. Residues Y169 and Q173 each coordinate L-tyrosine. Positions 229–233 match the 'KMSKS' region motif; sequence KFGKT. K232 lines the ATP pocket. One can recognise an S4 RNA-binding domain in the interval 352–418; sequence VRLAQLFADT…GKKSLASVAV (67 aa).

It belongs to the class-I aminoacyl-tRNA synthetase family. TyrS type 1 subfamily. As to quaternary structure, homodimer.

It localises to the cytoplasm. The enzyme catalyses tRNA(Tyr) + L-tyrosine + ATP = L-tyrosyl-tRNA(Tyr) + AMP + diphosphate + H(+). Catalyzes the attachment of tyrosine to tRNA(Tyr) in a two-step reaction: tyrosine is first activated by ATP to form Tyr-AMP and then transferred to the acceptor end of tRNA(Tyr). This chain is Tyrosine--tRNA ligase, found in Kineococcus radiotolerans (strain ATCC BAA-149 / DSM 14245 / SRS30216).